Here is a 318-residue protein sequence, read N- to C-terminus: Olfactory receptor 13C5 (318 aa).

Topologically, residues 1–25 (MEWENHTILVEFFLKGLSGHPRLEL) are extracellular. N-linked (GlcNAc...) asparagine glycosylation occurs at Asn-5. Residues 26–46 (LFFVLIFIMYVVILLGNGTLI) traverse the membrane as a helical segment. Over 47–54 (LISILDPH) the chain is Cytoplasmic. A helical transmembrane segment spans residues 55-75 (LHTPMYFFLGNLSFLDICYTT). Topologically, residues 76-99 (TSIPSTLVSFLSERKTISLSGCAV) are extracellular. Cys-97 and Cys-189 are oxidised to a cystine. Residues 100–120 (QMFLSLAMGTTECVLLGVMAF) form a helical membrane-spanning segment. Residues 121–139 (DRYVAICNPLRYPIIMSKD) are Cytoplasmic-facing. A helical transmembrane segment spans residues 140-160 (AYVPMAAGSWIIGAVNSAVQT). The Extracellular portion of the chain corresponds to 161-197 (VFVVQLPFCRNNIINHFTCEILAVMKLACADISGNEF). A helical transmembrane segment spans residues 198 to 217 (ILLVTTTLFLLTPLLLIIVS). Over 218–237 (YTLIILSIFKISSSEGRSKP) the chain is Cytoplasmic. Residues 238-258 (SSTCSARLTVVITFCGTIFLM) form a helical membrane-spanning segment. Residues 259–277 (YMKPKSQETLNSDDLDATD) lie on the Extracellular side of the membrane. A helical transmembrane segment spans residues 278–298 (KLIFIFYRVMTPMMNPLIYSL). Over 299-318 (RNKDVKEAVKHLLRRKNFNK) the chain is Cytoplasmic.

It belongs to the G-protein coupled receptor 1 family.

It is found in the cell membrane. Odorant receptor. This Homo sapiens (Human) protein is Olfactory receptor 13C5 (OR13C5).